Here is a 319-residue protein sequence, read N- to C-terminus: MAKRARLSTSFNPVYPYEDESSSQHPFINPGFISPDGFTQSPNGVLSLKCVNPLTTASGSLQLKVGSGLTVDTTDGSLEENIKVNTPLTKSNHSINLPIGNGLQIEQNKLCSKLGNGLTFDSSNSIALKNNTLWTGPKPEANCIIEYGKQNPDSKLTLILVKNGGIVNGYVTLMGASDYVNTLFKNKNVSINVELYFDATGHILPDSSSLKTDLELKYKQTADFSARGFMPSTTAYPFVLPNAGTHNENYIFGQCYYKASDGALFPLEVTVMLNKRLPDSRTSYVMTFLWSLNAGLAPETTQATLITSPFTFSYIREDD.

2 Shaft repeats span residues 44–73 (GVLS…TVDT) and 82–103 (IKVN…GNGL).

The protein belongs to the adenoviridae fiber family. In terms of assembly, homotrimer. Interacts with host receptor CD46. Interacts (via N-terminal tail region) with pentons.

It localises to the virion. It is found in the host nucleus. Its function is as follows. Forms spikes that protrude from each vertex of the icosahedral capsid. Interacts with host receptor CD46 to provide virion initial attachment to target cell. Fiber proteins are shed during virus entry, when virus is still at the cell surface. Heparan sulfate might also play a role in virus binding. The polypeptide is Fiber protein (Homo sapiens (Human)).